A 1164-amino-acid chain; its full sequence is Hamartin (1164 aa).

K30 is covalently cross-linked (Glycyl lysine isopeptide (Lys-Gly) (interchain with G-Cter in ubiquitin)). The segment at 403 to 787 (SDDYVHISLP…QIRQLQHDRE (385 aa)) is mediates interaction with WDR45B. Residues 439 to 571 (LNDRGSEEPP…ADESPAGDRE (133 aa)) are disordered. The span at 474–487 (EKDKEEAAISRELS) shows a compositional bias: basic and acidic residues. Phosphoserine occurs at positions 487, 505, 511, 521, and 598. The segment covering 513 to 530 (PGSQRKTHSAASSSQGAS) has biased composition (polar residues). Residues 721–997 (RKVIKAAALE…AAEERLDCCN (277 aa)) adopt a coiled-coil conformation. Residues 1006–1085 (GHNEEASGHN…TTVGSLPSSK (80 aa)) are disordered. A compositionally biased stretch (basic and acidic residues) spans 1007–1020 (HNEEASGHNGETKT). Over residues 1073-1085 (SIPTTVGSLPSSK) the composition is skewed to polar residues. A Phosphoserine modification is found at S1100. Residues 1131-1164 (IPLNLDGPHPSPPTPDSVGQLHIMDYNETHHEHS) form a disordered region. The span at 1155–1164 (DYNETHHEHS) shows a compositional bias: basic and acidic residues.

Component of the TSC-TBC complex (also named Rhebulator complex), composed of 2 molecules of TSC1, 2 molecules of TSC2 and 1 molecule of TBC1D7. Probably forms a complex composed of chaperones HSP90 and HSP70, co-chaperones STIP1/HOP, CDC37, PPP5C, PTGES3/p23, TSC1 and client protein TSC2. Forms a complex composed of chaperones HSP90 and HSP70, co-chaperones CDC37, PPP5C, TSC1 and client protein TSC2, CDK4, AKT, RAF1 and NR3C1; this complex does not contain co-chaperones STIP1/HOP and PTGES3/p23. Forms a complex containing HSP90AA1, TSC1 and TSC2; TSC1 is required to recruit TCS2 to the complex. Interacts (via C-terminus) with the closed form of HSP90AA1 (via the middle domain and TPR repeat-binding motif). Interacts with DOCK7. Interacts with FBXW5. Interacts with WDR45B. Interacts with RPAP3 and URI1. Phosphorylation at Ser-505 does not affect interaction with TSC2. Post-translationally, 'Lys-63'-linked ubiquitinated at Lys-30 by PELI1; the ubiquitination promotes TSC1/TSC2 complex stability. Highly expressed in skeletal muscle, followed by heart, brain, placenta, pancreas, lung, liver and kidney. Also expressed in embryonic kidney cells.

It is found in the lysosome membrane. Its subcellular location is the cytoplasm. The protein resides in the cytosol. Its function is as follows. Non-catalytic component of the TSC-TBC complex, a multiprotein complex that acts as a negative regulator of the canonical mTORC1 complex, an evolutionarily conserved central nutrient sensor that stimulates anabolic reactions and macromolecule biosynthesis to promote cellular biomass generation and growth. The TSC-TBC complex acts as a GTPase-activating protein (GAP) for the small GTPase RHEB, a direct activator of the protein kinase activity of mTORC1. In absence of nutrients, the TSC-TBC complex inhibits mTORC1, thereby preventing phosphorylation of ribosomal protein S6 kinase (RPS6KB1 and RPS6KB2) and EIF4EBP1 (4E-BP1) by the mTORC1 signaling. The TSC-TBC complex is inactivated in response to nutrients, relieving inhibition of mTORC1. Within the TSC-TBC complex, TSC1 stabilizes TSC2 and prevents TSC2 self-aggregation. Acts as a tumor suppressor. Involved in microtubule-mediated protein transport via its ability to regulate mTORC1 signaling. Also acts as a co-chaperone for HSP90AA1 facilitating HSP90AA1 chaperoning of protein clients such as kinases, TSC2 and glucocorticoid receptor NR3C1. Increases ATP binding to HSP90AA1 and inhibits HSP90AA1 ATPase activity. Competes with the activating co-chaperone AHSA1 for binding to HSP90AA1, thereby providing a reciprocal regulatory mechanism for chaperoning of client proteins. Recruits TSC2 to HSP90AA1 and stabilizes TSC2 by preventing the interaction between TSC2 and ubiquitin ligase HERC1. The chain is Hamartin from Homo sapiens (Human).